An 869-amino-acid polypeptide reads, in one-letter code: Serendipity locus protein H-1 (869 aa).

A compositionally biased stretch (basic and acidic residues) spans 1–17; that stretch reads MEGGKGEGKRMKEEAPS. 2 disordered regions span residues 1–32 and 134–165; these read MEGG…AGTP and FSVT…TPVK. Positions 146–164 are enriched in polar residues; it reads AFTNSPFKKTSSSGTSTPV. 8 C2H2-type zinc fingers span residues 269–293, 299–321, 331–352, 358–380, 386–408, 414–436, 442–464, and 470–493; these read HKCL…AAAH, YRCS…LKTH, KKCP…RKIH, YQCD…ARIH, YECP…QKYH, YRCE…NLVH, FACT…SNIH, and FKCN…RRRH. Disordered regions lie at residues 554–573 and 617–652; these read TSTA…QPQQ and PKQT…SSLE. Residues 630–648 show a composition bias toward low complexity; it reads APKQLQQKPQLLQQGQPQQ.

In terms of tissue distribution, distribution varies between nurse cells and the oocyte during oogenesis. Weakly expressed in follicle and border cells.

It is found in the nucleus. In terms of biological role, may belong to a complex set of multifingered proteins which play an important role in gene activation or regulation at early embryonic stages through a maximal accumulation of their transcripts (or protein product) in the mature oocyte. The polypeptide is Serendipity locus protein H-1 (wdn) (Drosophila melanogaster (Fruit fly)).